Consider the following 333-residue polypeptide: CMP-N-acetylneuraminate-beta-galactosamide-alpha-2,3-sialyltransferase 4 (333 aa).

The Cytoplasmic portion of the chain corresponds to 1-8 (MTSKSHWK). A helical; Signal-anchor for type II membrane protein transmembrane segment spans residues 9–26 (LLALALVLVVVMVWYSIS). Topologically, residues 27 to 333 (REDRYIEFFY…MGAVKNLTYF (307 aa)) are lumenal. Residues Asn61, Asn131, Asn310, and Asn329 are each glycosylated (N-linked (GlcNAc...) asparagine). Cys120 and Cys273 are oxidised to a cystine.

The protein belongs to the glycosyltransferase 29 family. Broadly expressed among tissues with highest levels in the small intestine and colon.

It localises to the golgi apparatus. It is found in the golgi stack membrane. It carries out the reaction a beta-D-galactosyl-(1-&gt;3)-N-acetyl-beta-D-galactosaminyl derivative + CMP-N-acetyl-beta-neuraminate = an N-acetyl-alpha-neuraminyl-(2-&gt;3)-beta-D-galactosyl-(1-&gt;3)-N-acetyl-beta-D-galactosaminyl derivative + CMP + H(+). The catalysed reaction is a beta-D-galactosyl-(1-&gt;3)-N-acetyl-alpha-D-galactosaminyl derivative + CMP-N-acetyl-beta-neuraminate = an N-acetyl-alpha-neuraminyl-(2-&gt;3)-beta-D-galactosyl-(1-&gt;3)-N-acetyl-alpha-D-galactosaminyl derivative + CMP + H(+). The enzyme catalyses a beta-D-galactosyl-(1-&gt;4)-N-acetyl-beta-D-glucosaminyl derivative + CMP-N-acetyl-beta-neuraminate = an N-acetyl-alpha-neuraminyl-(2-&gt;3)-beta-D-galactosyl-(1-&gt;4)-N-acetyl-beta-D-glucosaminyl derivative + CMP + H(+). It catalyses the reaction a ganglioside GM1 (d18:1(4E)) + CMP-N-acetyl-beta-neuraminate = a ganglioside GD1a (d18:1(4E)) + CMP + H(+). It carries out the reaction a ganglioside GA1 (d18:1(4E)) + CMP-N-acetyl-beta-neuraminate = a ganglioside GM1b (d18:1(4E)) + CMP + H(+). The catalysed reaction is a ganglioside GT1c (d18:1(4E)) + CMP-N-acetyl-beta-neuraminate = a ganglioside GQ1c (d18:1(4E)) + CMP + H(+). The enzyme catalyses a neolactoside nLc4Cer + CMP-N-acetyl-beta-neuraminate = a neolactoside IV(3)-alpha-NeuAc-nLc4Cer + CMP + H(+). It catalyses the reaction a neolactoside nLc4Cer(d18:1(4E)) + CMP-N-acetyl-beta-neuraminate = a neolactoside IV(3)-alpha-NeuAc-nLc4Cer(d18:1(4E)) + CMP + H(+). The protein operates within protein modification; protein glycosylation. Functionally, a beta-galactoside alpha2-3 sialyltransferase involved in terminal sialylation of glycoproteins and glycolipids. Catalyzes the transfer of sialic acid (N-acetyl-neuraminic acid; Neu5Ac) from the nucleotide sugar donor CMP-Neu5Ac onto acceptor Galbeta-(1-&gt;3)-GalNAc- and Galbeta-(1-&gt;4)-GlcNAc-terminated glycoconjugates through an alpha2-3 linkage. Plays a major role in hemostasis. Responsible for sialylation of plasma VWF/von Willebrand factor, preventing its recognition by asialoglycoprotein receptors (ASGPR) and subsequent clearance. Regulates ASGPR-mediated clearance of platelets. Participates in the biosynthesis of the sialyl Lewis X epitopes, both on O- and N-glycans, which are recognized by SELE/E-selectin, SELP/P-selectin and SELL/L-selectin. Essential for selectin-mediated rolling and adhesion of leukocytes during extravasation. Contributes to adhesion and transendothelial migration of neutrophils likely through terminal sialylation of CXCR2. In glycosphingolipid biosynthesis, sialylates GM1 and GA1 gangliosides to form GD1a and GM1b, respectively. Metabolizes brain c-series ganglioside GT1c forming GQ1c. Synthesizes ganglioside LM1 (IV3Neu5Ac-nLc4Cer), a major structural component of peripheral nerve myelin. This chain is CMP-N-acetylneuraminate-beta-galactosamide-alpha-2,3-sialyltransferase 4 (St3gal4), found in Mus musculus (Mouse).